A 546-amino-acid polypeptide reads, in one-letter code: Chaperonin GroEL (546 aa).

Residues Thr30 to Pro33, Lys51, Asp87 to Thr91, Gly415, and Asp495 each bind ATP.

The protein belongs to the chaperonin (HSP60) family. In terms of assembly, forms a cylinder of 14 subunits composed of two heptameric rings stacked back-to-back. Interacts with the co-chaperonin GroES.

The protein localises to the cytoplasm. It catalyses the reaction ATP + H2O + a folded polypeptide = ADP + phosphate + an unfolded polypeptide.. Functionally, together with its co-chaperonin GroES, plays an essential role in assisting protein folding. The GroEL-GroES system forms a nano-cage that allows encapsulation of the non-native substrate proteins and provides a physical environment optimized to promote and accelerate protein folding. The sequence is that of Chaperonin GroEL from Alteromonas mediterranea (strain DSM 17117 / CIP 110805 / LMG 28347 / Deep ecotype).